A 645-amino-acid polypeptide reads, in one-letter code: Acetyl-coenzyme A synthetase 2 (645 aa).

CoA contacts are provided by residues 190-193 (RGGK), Thr-308, and Asn-332. Residues 384–386 (GEP), 408–413 (DTWWQT), Asp-497, and Arg-512 contribute to the ATP site. A CoA-binding site is contributed by Ser-520. Position 523 (Arg-523) interacts with ATP. Positions 534, 536, and 539 each coordinate Mg(2+). The residue at position 606 (Lys-606) is an N6-acetyllysine.

Belongs to the ATP-dependent AMP-binding enzyme family. Mg(2+) is required as a cofactor. Acetylated. Deacetylation by the SIR2-homolog deacetylase activates the enzyme.

The enzyme catalyses acetate + ATP + CoA = acetyl-CoA + AMP + diphosphate. Functionally, catalyzes the conversion of acetate into acetyl-CoA (AcCoA), an essential intermediate at the junction of anabolic and catabolic pathways. AcsA undergoes a two-step reaction. In the first half reaction, AcsA combines acetate with ATP to form acetyl-adenylate (AcAMP) intermediate. In the second half reaction, it can then transfer the acetyl group from AcAMP to the sulfhydryl group of CoA, forming the product AcCoA. The sequence is that of Acetyl-coenzyme A synthetase 2 from Pseudomonas aeruginosa (strain ATCC 15692 / DSM 22644 / CIP 104116 / JCM 14847 / LMG 12228 / 1C / PRS 101 / PAO1).